We begin with the raw amino-acid sequence, 152 residues long: Transcriptional regulator MraZ (152 aa).

SpoVT-AbrB domains are found at residues Ala-5–Glu-52 and Ala-81–Ala-124.

It belongs to the MraZ family. In terms of assembly, forms oligomers.

Its subcellular location is the cytoplasm. The protein resides in the nucleoid. The protein is Transcriptional regulator MraZ of Shewanella oneidensis (strain ATCC 700550 / JCM 31522 / CIP 106686 / LMG 19005 / NCIMB 14063 / MR-1).